A 57-amino-acid polypeptide reads, in one-letter code: Myrmicitoxin(1)-Pm7a (57 aa).

An N-terminal signal peptide occupies residues 1-23 (MMKIIYAFLLIAVVAFMGSGIMA). A propeptide spanning residues 24–31 (EPLAEAIA) is cleaved from the precursor.

Belongs to the formicidae venom clade 4 family. As to expression, expressed by the venom gland.

Its subcellular location is the secreted. Its function is as follows. Probable neurotoxin. This Pogonomyrmex maricopa (Maricopa harvester ant) protein is Myrmicitoxin(1)-Pm7a.